Reading from the N-terminus, the 550-residue chain is Zinc finger protein 426 (550 aa).

The region spanning 39 to 110 is the KRAB domain; sequence VSFEDVIVDF…KIVFPEWKLQ (72 aa). C2H2-type zinc fingers lie at residues 219–241, 274–296, 302–324, 330–352, 358–380, 386–408, 414–436, 442–464, 470–492, 498–522, and 528–550; these read FECSDCGKSFMSQSHLQTHQRTH, HRCKECGKGYRYPAYLNIHMRTH, YECKECGKAFNYSNSFQIHGRTH, YVCSQCGKAFTQHSGLSIHVRSH, YGCKECGKAFLTSSRLIQHIRTH, FVCVKCGKAFAISSNLNGHLKLH, CECKICGKAFGYLSCLNNHMRTH, YTCKECGKAFNYSTHLKIHMRIH, YECKQCGKAFSHSTSFQIHERTH, YECKECGKAFICPSSFRIHEISHTH, and YKCQQCGKAYSHPRSLRRHERIH.

It is found in the nucleus. May be involved in transcriptional regulation. This chain is Zinc finger protein 426 (Znf426), found in Mus musculus (Mouse).